Consider the following 322-residue polypeptide: UDP-N-acetylenolpyruvoylglucosamine reductase (322 aa).

The 167-residue stretch at arginine 36 to glycine 202 folds into the FAD-binding PCMH-type domain. Arginine 182 is an active-site residue. The Proton donor role is filled by serine 231. Glutamate 301 is a catalytic residue.

The protein belongs to the MurB family. Requires FAD as cofactor.

The protein resides in the cytoplasm. The catalysed reaction is UDP-N-acetyl-alpha-D-muramate + NADP(+) = UDP-N-acetyl-3-O-(1-carboxyvinyl)-alpha-D-glucosamine + NADPH + H(+). It participates in cell wall biogenesis; peptidoglycan biosynthesis. In terms of biological role, cell wall formation. The polypeptide is UDP-N-acetylenolpyruvoylglucosamine reductase (Brucella canis (strain ATCC 23365 / NCTC 10854 / RM-666)).